The following is a 575-amino-acid chain: Phosphoenolpyruvate-protein phosphotransferase (575 aa).

Y122 bears the Phosphotyrosine mark. Residue H189 is the Tele-phosphohistidine intermediate of the active site. R296 and R332 together coordinate phosphoenolpyruvate. Positions 431 and 455 each coordinate Mg(2+). Phosphoenolpyruvate is bound by residues 454–455 (ND) and R465. The active-site Proton donor is C502.

This sequence belongs to the PEP-utilizing enzyme family. As to quaternary structure, homodimer. Interacts with the pole-localizer protein TmaR. Binding to TmaR is reversible as long as TmaR can get phosphorylated, whereas binding to non-phosphorylated TmaR is very strong and shifts the equilibrium toward binding. Requires Mg(2+) as cofactor. Post-translationally, phosphorylated on Tyr-122. Phosphorylation on Tyr-122 is important for polar localization but not for interaction with TmaR and for activity.

It localises to the cytoplasm. It catalyses the reaction L-histidyl-[protein] + phosphoenolpyruvate = N(pros)-phospho-L-histidyl-[protein] + pyruvate. Inhibited by oxalate. Functionally, general (non sugar-specific) component of the phosphoenolpyruvate-dependent sugar phosphotransferase system (sugar PTS). This major carbohydrate active-transport system catalyzes the phosphorylation of incoming sugar substrates concomitantly with their translocation across the cell membrane. Enzyme I transfers the phosphoryl group from phosphoenolpyruvate (PEP) to the phosphoryl carrier protein (HPr). Can also use (Z)-3-fluoro-PEP (ZFPEP), (Z)-3-methyl-PEP (ZMePEP), (Z)-3-chloro-PEP (ZClPEP) and (E)-3-chloro-PEP (EClPEP) as alternative phosphoryl donors. The chain is Phosphoenolpyruvate-protein phosphotransferase from Escherichia coli (strain K12).